Reading from the N-terminus, the 960-residue chain is RasGEF domain-containing serine/threonine-protein kinase X (960 aa).

A Protein kinase domain is found at 21–274; it reads LEFNEKIGKG…FDEILSQLKV (254 aa). ATP contacts are provided by residues 27-35 and lysine 48; that span reads IGKGSFGSV. Aspartate 140 serves as the catalytic Proton acceptor. A compositionally biased stretch (low complexity) spans 314–368; sequence NISFSPNNSNNNNNNNNNISNISPDITTGIQQINLSSSGGSNNSSPSTPPQGSQL. Disordered regions lie at residues 314–372 and 393–413; these read NISF…VSLA and GQLS…HKPS. Residues 437-565 enclose the N-terminal Ras-GEF domain; it reads PCYAALTSHI…LGTTISNNEL (129 aa). The disordered stretch occupies residues 596 to 651; the sequence is NNNNNNNNNPVNNINNINNNNSVNSSSSNNNNNNNNNNSNNNNNNNNNNNNNNNNN. The Ras-GEF domain maps to 712–957; the sequence is HSTELARQIT…KNNSLKCEPP (246 aa).

It belongs to the protein kinase superfamily. TKL Ser/Thr protein kinase family.

The enzyme catalyses L-seryl-[protein] + ATP = O-phospho-L-seryl-[protein] + ADP + H(+). It catalyses the reaction L-threonyl-[protein] + ATP = O-phospho-L-threonyl-[protein] + ADP + H(+). Functionally, promotes the exchange of Ras-bound GDP by GTP. This chain is RasGEF domain-containing serine/threonine-protein kinase X (gefX), found in Dictyostelium discoideum (Social amoeba).